The following is a 1338-amino-acid chain: Terpene cyclase-glycosyl transferase fusion protein fsoA (1338 aa).

Positions 1–687 (MDMAPDELDE…RFLDRTDEPD (687 aa)) are terpenne cyclase. 3 PFTB repeats span residues 19–61 (LEQA…PALN), 69–111 (AAAL…RLLG), and 267–307 (LRRC…SLEH). The active-site Proton donor is the D412. 3 PFTB repeats span residues 434–475 (VEMG…DSLV), 515–556 (AQKA…AFCG), and 564–615 (ALRA…LRFR). The glycosyltransferase stretch occupies residues 688 to 1338 (QDRDLPLLMT…NMLLGEGCQG (651 aa)).

It in the N-terminal section; belongs to the terpene cyclase/mutase family. This sequence in the C-terminal section; belongs to the glycosyltransferase 28 family.

The catalysed reaction is (S)-2,3-epoxysqualene = isomotiol. It carries out the reaction isomotiol + UDP-alpha-D-glucose = 3-O-(beta-D-glucopyranosyl)-isomotiol + UDP + H(+). It catalyses the reaction 2alpha-hydroxyisomotiol + UDP-alpha-D-glucose = 3-O-(beta-D-glucopyranosyl)-2alpha-hydroxyisomotiol + UDP + H(+). It participates in secondary metabolite biosynthesis; terpenoid biosynthesis. In terms of biological role, terpene cyclase-glycosyl transferase fusion protein; part of the gene cluster that mediates the biosynthesis of the enfumafungin-type antibiotic, fuscoatroside. Within the pathway, fsoA plays two important roles, the cyclization of 2,3(S)-oxidosqualene into isomotiol via its terpene cyclase (TC) domain and the C3 glycosylation of several intermediates via its glycosyltransferase (GT) domain. The fuscoatroside biosynthesis is initiated by the cyclization of 2,3(S)-oxidosqualene through FsoA's TC domain, leading to the formation of the fernane skeleton isomotiol, harboring a fernane triterpene skeleton with a C8-C9 double bond. Subsequently, C2-alpha-hydroxylation mediated by fsoD results in the production of 2-alpha-hydroxy-isomotiol, which is further acetylated by fsoF. The GT domain of FsoA may convert isomotiol, 2-alpha-hydroxy-isomotiol, and the acetylated derivative of 2-alpha-hydroxy-isomotiol into their corresponding glycosides 3-O-(beta-D-glucopyranosyl)-isomotiol, 3-O-(beta-D-glucopyranosyl)-2-alpha-hydroxy-isomotiol, and 3-O-(beta-D-glucopyranosyl)-2-alpha-acetoxy-isomotiol, which then undergo oxidative cleavage under the action of fsoE to form s 2-deacetoxy-fuscoatroside, 2-deacetyl-fuscoatroside, and fuscoatroside, respectively. Although hydroxylation followed by acetylation of 3-O-(beta-D-glucopyranosyl)-isomotiol and 2-deacetoxy-fuscoatroside by fsoD and fsoF could not be ruled out, this process is likely to occur with difficulty due to bulky steric hindrance caused by the presence of a glycan at C3 in these compounds. Interestingly, fsoE can also utilize the aglycones isomotiol and 2-alpha-hydroxy-isomotiol as substrates to generate 19-beta-hydroxy-isomotiol and 2-alpha,19-beta-dihydroxy-isomotiol, respectively. These reactions occur with lower efficiency. Finally, fsoE can further convert 2-alpha,19-beta-dihydroxy-isomotiol into 2-alpha-hydroxy-ismotiol-19-one and 2-alpha-hydroxy-ismotiol-19-one into 2-deacetyl-3-deglucopyranosyl-fuscoatroside. The protein is Terpene cyclase-glycosyl transferase fusion protein fsoA of Humicola fuscoatra.